A 335-amino-acid chain; its full sequence is Ketol-acid reductoisomerase (NAD(P)(+)) (335 aa).

Residues 2-182 (AKIYKDEDIS…GCARAGVIES (181 aa)) form the KARI N-terminal Rossmann domain. NADP(+) is bound by residues 25 to 28 (YGSQ), R49, S53, and 83 to 86 (DMVQ). Residue H108 is part of the active site. G134 contacts NADP(+). In terms of domain architecture, KARI C-terminal knotted spans 183–328 (TFKEETETDL…RKLREMMFRG (146 aa)). 4 residues coordinate Mg(2+): D191, E195, E227, and E231. S252 contributes to the substrate binding site.

This sequence belongs to the ketol-acid reductoisomerase family. In terms of assembly, homodimer. Requires Mg(2+) as cofactor.

It catalyses the reaction (2R)-2,3-dihydroxy-3-methylbutanoate + NAD(+) = (2S)-2-acetolactate + NADH + H(+). It carries out the reaction (2R)-2,3-dihydroxy-3-methylbutanoate + NADP(+) = (2S)-2-acetolactate + NADPH + H(+). It participates in amino-acid biosynthesis; L-isoleucine biosynthesis; L-isoleucine from 2-oxobutanoate: step 2/4. It functions in the pathway amino-acid biosynthesis; L-valine biosynthesis; L-valine from pyruvate: step 2/4. Functionally, involved in the biosynthesis of branched-chain amino acids (BCAA). Catalyzes an alkyl-migration followed by a ketol-acid reduction of (S)-2-acetolactate (S2AL) to yield (R)-2,3-dihydroxy-isovalerate. In the isomerase reaction, S2AL is rearranged via a Mg-dependent methyl migration to produce 3-hydroxy-3-methyl-2-ketobutyrate (HMKB). In the reductase reaction, this 2-ketoacid undergoes a metal-dependent reduction by NADPH or NADH to yield (R)-2,3-dihydroxy-isovalerate. This chain is Ketol-acid reductoisomerase (NAD(P)(+)), found in Ignisphaera aggregans (strain DSM 17230 / JCM 13409 / AQ1.S1).